The primary structure comprises 167 residues: UPF0114 protein in repA1-repA2 intergenic region (167 aa).

A run of 3 helical transmembrane segments spans residues 15-35 (LMFP…LKFF), 53-73 (LVLV…LVMV), and 136-156 (IMLC…MAYI).

The protein belongs to the UPF0114 family.

Its subcellular location is the cell membrane. This chain is UPF0114 protein in repA1-repA2 intergenic region, found in Buchnera aphidicola subsp. Diuraphis noxia.